Here is a 267-residue protein sequence, read N- to C-terminus: Eukaryotic translation initiation factor 3 subunit J (267 aa).

2 disordered regions span residues 1 to 118 and 221 to 241; these read MAPS…DLKH and MREE…KTKV. Acidic residues predominate over residues 28–46; sequence DEEEEDVLDSWDAAEDSEV. A coiled-coil region spans residues 44–99; it reads SEVEREKAAKAAAAAAKAEAEAAAKKKSKAQRIEERKQERKKLAEANESDEDSEED. The segment covering 74 to 88 has biased composition (basic and acidic residues); the sequence is QRIEERKQERKKLAE. Positions 90-100 are enriched in acidic residues; the sequence is NESDEDSEEDE. Basic and acidic residues-rich tracts occupy residues 108-118 and 221-231; these read RRTEKEGDLKH and MREERAADKGN.

The protein belongs to the eIF-3 subunit J family. Component of the eukaryotic translation initiation factor 3 (eIF-3) complex.

The protein resides in the cytoplasm. Its function is as follows. Component of the eukaryotic translation initiation factor 3 (eIF-3) complex, which is involved in protein synthesis of a specialized repertoire of mRNAs and, together with other initiation factors, stimulates binding of mRNA and methionyl-tRNAi to the 40S ribosome. The eIF-3 complex specifically targets and initiates translation of a subset of mRNAs involved in cell proliferation. The sequence is that of Eukaryotic translation initiation factor 3 subunit J (hcr1) from Aspergillus fumigatus (strain CBS 144.89 / FGSC A1163 / CEA10) (Neosartorya fumigata).